The primary structure comprises 364 residues: MKTVTQTLNVALGERSYPIHIGTDVLSRPELILPFLSQKRVVVVTNTSVAPLYLDELRSGLEKCGIETLPVVLPDGEQYKTWETLNLIFDALLAARCERNTTLIALGGGVIGDMGGFAAACYQRGMPFIQVPTTLLSQVDSSVGGKTAINHPMGKNMVGAFYQPRLVLADLSTLDTLPDRELKAGLAEVIKYGLIRDPDFFVWLEANLEKLLVRDKSALAYAVHRSCANKAEVVAADERESGERALLNLGHTFGHAIETGLGYGEWLHGEAVAAGTLIAAELSCRLGWIDADSVARIEKIFVRSGLPVKAPDLGAARYLELMSHDKKVQDGKLRLVLLREIGKAVVSDAATTAQMVDAIEARCT.

NAD(+) contacts are provided by residues 75-80, 109-113, 133-134, lysine 146, lysine 155, and 173-176; these read DGEQYK, GVIGD, TT, and TLDT. Zn(2+) is bound by residues glutamate 188, histidine 251, and histidine 268.

The protein belongs to the sugar phosphate cyclases superfamily. Dehydroquinate synthase family. Co(2+) serves as cofactor. It depends on Zn(2+) as a cofactor. NAD(+) is required as a cofactor.

The protein resides in the cytoplasm. It catalyses the reaction 7-phospho-2-dehydro-3-deoxy-D-arabino-heptonate = 3-dehydroquinate + phosphate. The protein operates within metabolic intermediate biosynthesis; chorismate biosynthesis; chorismate from D-erythrose 4-phosphate and phosphoenolpyruvate: step 2/7. Its function is as follows. Catalyzes the conversion of 3-deoxy-D-arabino-heptulosonate 7-phosphate (DAHP) to dehydroquinate (DHQ). This is 3-dehydroquinate synthase from Dechloromonas aromatica (strain RCB).